The sequence spans 476 residues: Proline--tRNA ligase (476 aa).

The protein belongs to the class-II aminoacyl-tRNA synthetase family. ProS type 3 subfamily. In terms of assembly, homodimer.

It localises to the cytoplasm. The catalysed reaction is tRNA(Pro) + L-proline + ATP = L-prolyl-tRNA(Pro) + AMP + diphosphate. Its function is as follows. Catalyzes the attachment of proline to tRNA(Pro) in a two-step reaction: proline is first activated by ATP to form Pro-AMP and then transferred to the acceptor end of tRNA(Pro). The chain is Proline--tRNA ligase from Mycoplasma mobile (strain ATCC 43663 / 163K / NCTC 11711) (Mesomycoplasma mobile).